A 41-amino-acid chain; its full sequence is IPQCADIKESGQPNDKCRCNGITCTVGKCKIGRGDDNDKCT.

The short motif at 33 to 35 is the Cell attachment site element; that stretch reads RGD.

It belongs to the ornatin family.

The protein localises to the secreted. Potent inhibitor of fibrinogen interaction with platelet receptors expressed on glycoprotein IIb-IIIa complex. May prevent blood from clotting during either feeding and/or storage of ingested blood. The protein is Ornatin-A3 of Placobdella ornata (Turtle leech).